We begin with the raw amino-acid sequence, 362 residues long: Probable dual-specificity RNA methyltransferase RlmN (362 aa).

Glu105 (proton acceptor) is an active-site residue. Residues 111 to 344 (HEYGNSICVT…VTIRREQGHD (234 aa)) enclose the Radical SAM core domain. Cysteines 118 and 349 form a disulfide. The [4Fe-4S] cluster site is built by Cys125, Cys129, and Cys132. S-adenosyl-L-methionine-binding positions include 175–176 (GE), Ser207, 230–232 (SLH), and Asn306. Cys349 serves as the catalytic S-methylcysteine intermediate.

It belongs to the radical SAM superfamily. RlmN family. Requires [4Fe-4S] cluster as cofactor.

The protein resides in the cytoplasm. The catalysed reaction is adenosine(2503) in 23S rRNA + 2 reduced [2Fe-2S]-[ferredoxin] + 2 S-adenosyl-L-methionine = 2-methyladenosine(2503) in 23S rRNA + 5'-deoxyadenosine + L-methionine + 2 oxidized [2Fe-2S]-[ferredoxin] + S-adenosyl-L-homocysteine. It catalyses the reaction adenosine(37) in tRNA + 2 reduced [2Fe-2S]-[ferredoxin] + 2 S-adenosyl-L-methionine = 2-methyladenosine(37) in tRNA + 5'-deoxyadenosine + L-methionine + 2 oxidized [2Fe-2S]-[ferredoxin] + S-adenosyl-L-homocysteine. Its function is as follows. Specifically methylates position 2 of adenine 2503 in 23S rRNA and position 2 of adenine 37 in tRNAs. The polypeptide is Probable dual-specificity RNA methyltransferase RlmN (Bacillus cereus (strain G9842)).